The following is a 133-amino-acid chain: Small ribosomal subunit protein uS8 (133 aa).

It belongs to the universal ribosomal protein uS8 family. As to quaternary structure, part of the 30S ribosomal subunit. Contacts proteins S5 and S12.

In terms of biological role, one of the primary rRNA binding proteins, it binds directly to 16S rRNA central domain where it helps coordinate assembly of the platform of the 30S subunit. The protein is Small ribosomal subunit protein uS8 of Thermosynechococcus vestitus (strain NIES-2133 / IAM M-273 / BP-1).